Reading from the N-terminus, the 278-residue chain is 4-hydroxy-3-methylbut-2-enyl diphosphate reductase (278 aa).

Cys-12 provides a ligand contact to [4Fe-4S] cluster. (2E)-4-hydroxy-3-methylbut-2-enyl diphosphate is bound by residues His-41 and His-74. Residues His-41 and His-74 each coordinate dimethylallyl diphosphate. 2 residues coordinate isopentenyl diphosphate: His-41 and His-74. Residue Cys-96 participates in [4Fe-4S] cluster binding. His-124 contributes to the (2E)-4-hydroxy-3-methylbut-2-enyl diphosphate binding site. His-124 is a dimethylallyl diphosphate binding site. His-124 contacts isopentenyl diphosphate. Residue Glu-126 is the Proton donor of the active site. Residue Thr-161 coordinates (2E)-4-hydroxy-3-methylbut-2-enyl diphosphate. Residue Cys-189 coordinates [4Fe-4S] cluster. The (2E)-4-hydroxy-3-methylbut-2-enyl diphosphate site is built by Ser-217, Asn-219, and Ser-261. Residues Ser-217, Asn-219, and Ser-261 each coordinate dimethylallyl diphosphate. Residues Ser-217, Asn-219, and Ser-261 each coordinate isopentenyl diphosphate.

This sequence belongs to the IspH family. The cofactor is [4Fe-4S] cluster.

It catalyses the reaction isopentenyl diphosphate + 2 oxidized [2Fe-2S]-[ferredoxin] + H2O = (2E)-4-hydroxy-3-methylbut-2-enyl diphosphate + 2 reduced [2Fe-2S]-[ferredoxin] + 2 H(+). The catalysed reaction is dimethylallyl diphosphate + 2 oxidized [2Fe-2S]-[ferredoxin] + H2O = (2E)-4-hydroxy-3-methylbut-2-enyl diphosphate + 2 reduced [2Fe-2S]-[ferredoxin] + 2 H(+). It functions in the pathway isoprenoid biosynthesis; dimethylallyl diphosphate biosynthesis; dimethylallyl diphosphate from (2E)-4-hydroxy-3-methylbutenyl diphosphate: step 1/1. Its pathway is isoprenoid biosynthesis; isopentenyl diphosphate biosynthesis via DXP pathway; isopentenyl diphosphate from 1-deoxy-D-xylulose 5-phosphate: step 6/6. Its function is as follows. Catalyzes the conversion of 1-hydroxy-2-methyl-2-(E)-butenyl 4-diphosphate (HMBPP) into a mixture of isopentenyl diphosphate (IPP) and dimethylallyl diphosphate (DMAPP). Acts in the terminal step of the DOXP/MEP pathway for isoprenoid precursor biosynthesis. The polypeptide is 4-hydroxy-3-methylbut-2-enyl diphosphate reductase (Anaeromyxobacter sp. (strain K)).